The primary structure comprises 155 residues: Endoribonuclease YbeY (155 aa).

Zn(2+)-binding residues include histidine 114, histidine 118, and histidine 124.

It belongs to the endoribonuclease YbeY family. Zn(2+) serves as cofactor.

The protein resides in the cytoplasm. Functionally, single strand-specific metallo-endoribonuclease involved in late-stage 70S ribosome quality control and in maturation of the 3' terminus of the 16S rRNA. In Escherichia coli O7:K1 (strain IAI39 / ExPEC), this protein is Endoribonuclease YbeY.